The primary structure comprises 359 residues: Dihydroorotate dehydrogenase (quinone) (359 aa).

FMN-binding positions include 68–72 (AGFDK) and Thr92. A substrate-binding site is contributed by Lys72. 117–121 (NRMGF) contacts substrate. FMN contacts are provided by Asn145 and Asn176. Residue Asn176 participates in substrate binding. The active-site Nucleophile is Ser179. Asn181 provides a ligand contact to substrate. FMN contacts are provided by Lys212 and Thr240. Position 241 to 242 (241 to 242 (NT)) interacts with substrate. Residues Gly266, Gly295, and 316–317 (YT) contribute to the FMN site.

The protein belongs to the dihydroorotate dehydrogenase family. Type 2 subfamily. As to quaternary structure, monomer. FMN serves as cofactor.

Its subcellular location is the cell membrane. The catalysed reaction is (S)-dihydroorotate + a quinone = orotate + a quinol. It functions in the pathway pyrimidine metabolism; UMP biosynthesis via de novo pathway; orotate from (S)-dihydroorotate (quinone route): step 1/1. Functionally, catalyzes the conversion of dihydroorotate to orotate with quinone as electron acceptor. This is Dihydroorotate dehydrogenase (quinone) from Corynebacterium striatum.